We begin with the raw amino-acid sequence, 186 residues long: Tumor necrosis factor, alpha-induced protein 8-like protein 2 B (186 aa).

Belongs to the TNFAIP8 family. TNFAIP8L2 subfamily.

Acts as a negative regulator of innate and adaptive immunity by maintaining immune homeostasis. Negative regulator of Toll-like receptor and T-cell receptor function. Prevents hyperresponsiveness of the immune system and maintains immune homeostasis. Inhibits jun/ap1 and NF-kappa-B activation. Promotes Fas-induced apoptosis. The sequence is that of Tumor necrosis factor, alpha-induced protein 8-like protein 2 B (tnfaip8l2b) from Danio rerio (Zebrafish).